A 263-amino-acid polypeptide reads, in one-letter code: N-acyl homoserine lactonase AttM (263 aa).

H103, H105, D107, H108, H180, D202, and H247 together coordinate Zn(2+).

Belongs to the metallo-beta-lactamase superfamily. The cofactor is Zn(2+).

The enzyme catalyses an N-acyl-L-homoserine lactone + H2O = an N-acyl-L-homoserine + H(+). The sequence is that of N-acyl homoserine lactonase AttM from Agrobacterium fabrum (strain C58 / ATCC 33970) (Agrobacterium tumefaciens (strain C58)).